Here is a 115-residue protein sequence, read N- to C-terminus: Large ribosomal subunit protein bL20 (115 aa).

It belongs to the bacterial ribosomal protein bL20 family.

Functionally, binds directly to 23S ribosomal RNA and is necessary for the in vitro assembly process of the 50S ribosomal subunit. It is not involved in the protein synthesizing functions of that subunit. The chain is Large ribosomal subunit protein bL20 from Chlorobium limicola (strain DSM 245 / NBRC 103803 / 6330).